The following is a 285-amino-acid chain: Ribosomal RNA small subunit methyltransferase A (285 aa).

Residues Asn-29, Leu-31, Gly-56, Glu-77, Asp-102, and Asn-123 each coordinate S-adenosyl-L-methionine.

The protein belongs to the class I-like SAM-binding methyltransferase superfamily. rRNA adenine N(6)-methyltransferase family. RsmA subfamily.

It is found in the cytoplasm. It carries out the reaction adenosine(1518)/adenosine(1519) in 16S rRNA + 4 S-adenosyl-L-methionine = N(6)-dimethyladenosine(1518)/N(6)-dimethyladenosine(1519) in 16S rRNA + 4 S-adenosyl-L-homocysteine + 4 H(+). Its function is as follows. Specifically dimethylates two adjacent adenosines (A1518 and A1519) in the loop of a conserved hairpin near the 3'-end of 16S rRNA in the 30S particle. May play a critical role in biogenesis of 30S subunits. This chain is Ribosomal RNA small subunit methyltransferase A, found in Clostridium perfringens (strain ATCC 13124 / DSM 756 / JCM 1290 / NCIMB 6125 / NCTC 8237 / Type A).